The chain runs to 398 residues: MAKLTVKDVDLKGKKVLVRVDFNVPLKDGVITNDNRITAALPTIKYIIEQGGRAILFSHLGRVKEEADKEGKSLAPVAADLAAKLGQDVVFPGVTRGSKLEEAINALEDGQVLLVENTRFEDVDGKKESKNDEELGKYWASLGDGIFVNDAFGTAHRAHASNVGISANVEKAVAGFLLENEIAYIQEAVETPERPFVAILGGSKVSDKIGVIENLLEKADKVLIGGGMTYTFYKAQGIEIGNSLVEEDKLDVAKDLLEKSNGKLILPVDSKEANAFAGYTEVRDTEGEAVSEGFLGLDIGPKSIAKFDEALTGAKTVVWNGPMGVFENPDFQAGTIGVMDAIVKQPGVKSIIGGGDSAAAAINLGRADKFSWISTGGGASMELLEGKVLPGLAALTEK.

Substrate-binding positions include 21–23 (DFN), arginine 36, 59–62 (HLGR), arginine 119, and arginine 157. ATP-binding positions include lysine 208, glycine 296, glutamate 327, and 354-357 (GGDS).

It belongs to the phosphoglycerate kinase family. Monomer.

It localises to the cytoplasm. It catalyses the reaction (2R)-3-phosphoglycerate + ATP = (2R)-3-phospho-glyceroyl phosphate + ADP. The protein operates within carbohydrate degradation; glycolysis; pyruvate from D-glyceraldehyde 3-phosphate: step 2/5. In Streptococcus pyogenes serotype M3 (strain ATCC BAA-595 / MGAS315), this protein is Phosphoglycerate kinase.